A 592-amino-acid polypeptide reads, in one-letter code: RNA-binding protein 47 (592 aa).

Positions 1–24 are enriched in low complexity; sequence MTAEDAAAAMSSDSAAGGAASAKA. Residues 1 to 26 are disordered; sequence MTAEDAAAAMSSDSAAGGAASAKAPE. RRM domains are found at residues 73–151, 153–235, and 248–320; these read CEVF…CSVD, CRLF…WAEP, and KILY…LAKP. 2 positions are modified to asymmetric dimethylarginine; alternate: Arg-397 and Arg-408. Omega-N-methylarginine; alternate is present on residues Arg-397 and Arg-408.

It belongs to the RRM RBM47 family. Homodimer. Interacts with A1CF. Interacts with APOBEC1; form an mRNA editing complex. Interacts with RBPMS.

It localises to the nucleus. The protein resides in the cytoplasm. Its function is as follows. Single-stranded RNA-binding protein that functions in a variety of RNA processes, including alternative splicing, RNA stabilization, and RNA editing. Functions as an enzyme-substrate adapter for the cytidine deaminase APOBEC1. With APOBEC1 forms an mRNA editing complex involved into cytidine to uridine editing of a variety of mRNA molecules. Through the binding of their 3'UTR, also stabilizes a variety of mRNAs and regulates the expression of genes such as the interferon alpha/beta receptor and interleukin-10. Also involved in the alternative splicing of several genes including TJP1. Binds the pre-mRNA (U)GCAUG consensus sequences in downstream intronic regions of alternative exons, regulating their exclusion and inclusion into mRNAs. Independently of its RNA-binding activity, could negatively regulate MAVS by promoting its lysosomal degradation. The polypeptide is RNA-binding protein 47 (Canis lupus familiaris (Dog)).